The chain runs to 152 residues: Large ribosomal subunit protein uL13 (152 aa).

This sequence belongs to the universal ribosomal protein uL13 family. Part of the 50S ribosomal subunit.

This protein is one of the early assembly proteins of the 50S ribosomal subunit, although it is not seen to bind rRNA by itself. It is important during the early stages of 50S assembly. In Wolbachia pipientis subsp. Culex pipiens (strain wPip), this protein is Large ribosomal subunit protein uL13.